The following is a 149-amino-acid chain: Transcriptional repressor NrdR (149 aa).

A zinc finger lies at 3-34 (CPFCSHLETQVIETRVFEDAASIRRRRQCAAC). Residues 49–139 (PAVVKKDGRR…VYRSFEGIDD (91 aa)) form the ATP-cone domain.

The protein belongs to the NrdR family. Zn(2+) is required as a cofactor.

Its function is as follows. Negatively regulates transcription of bacterial ribonucleotide reductase nrd genes and operons by binding to NrdR-boxes. This is Transcriptional repressor NrdR from Verminephrobacter eiseniae (strain EF01-2).